The sequence spans 282 residues: Pantothenate synthetase (282 aa).

30–37 (MGYLHEGH) contributes to the ATP binding site. His-37 serves as the catalytic Proton donor. Gln-61 contacts (R)-pantoate. Gln-61 is a beta-alanine binding site. 147–150 (GMKD) serves as a coordination point for ATP. Gln-153 lines the (R)-pantoate pocket. ATP contacts are provided by residues Val-176 and 184 to 187 (KSSR).

It belongs to the pantothenate synthetase family. Homodimer.

It localises to the cytoplasm. The catalysed reaction is (R)-pantoate + beta-alanine + ATP = (R)-pantothenate + AMP + diphosphate + H(+). Its pathway is cofactor biosynthesis; (R)-pantothenate biosynthesis; (R)-pantothenate from (R)-pantoate and beta-alanine: step 1/1. Functionally, catalyzes the condensation of pantoate with beta-alanine in an ATP-dependent reaction via a pantoyl-adenylate intermediate. This Bacillus cereus (strain B4264) protein is Pantothenate synthetase.